A 491-amino-acid chain; its full sequence is MKNKEVIVNNYLNLENTYIKLPKKLFSEQNPSEVKSAKLEVFNESLASDLGLSEEFLQSDDGVAFFAGNKILEGTVPIAQAYAGHQFGHFTMLGDGRAILIGELKSQNGERFDIQLKGAGRTPYSRGGDGKATLGPMLREYIISEGMYGLGIPTTRSLAVVSTGEDVMREEILQGAVLTRIAKSHIRVGTFQFVSNWGTVEELKALADYTLNRHFKKAEYEGNPYIYLLNEVIKSQAKLISKWQLVGFIHGVMNTDNVTISGETIDYGPCAFMDVYDPDTVFSSIDIKGRYAYGNQPKIGAWNLARFAETLLPLLDKNLEVAVEIAQNSISKYSDLYNKYWYTGMRAKLGIFNEEEEDKKLIQSLLTIMKRFKSDYTNTFRNLTLGNLSDIDVFTSEEFKTWYELWKERLTRQDQSSEESNKLMKKNNPTVIPRNYRVEEALVAAVKDNDYCVMQRLLDVLKDPYDYSNMNEYYSTLPKSTSCAYKTYCGT.

Glycine 94, glycine 96, arginine 97, lysine 117, aspartate 129, glycine 130, arginine 180, and arginine 187 together coordinate ATP. Aspartate 256 acts as the Proton acceptor in catalysis. Positions 257 and 266 each coordinate Mg(2+). Residue aspartate 266 participates in ATP binding.

Belongs to the SELO family. Mg(2+) serves as cofactor. It depends on Mn(2+) as a cofactor.

The enzyme catalyses L-seryl-[protein] + ATP = 3-O-(5'-adenylyl)-L-seryl-[protein] + diphosphate. It carries out the reaction L-threonyl-[protein] + ATP = 3-O-(5'-adenylyl)-L-threonyl-[protein] + diphosphate. It catalyses the reaction L-tyrosyl-[protein] + ATP = O-(5'-adenylyl)-L-tyrosyl-[protein] + diphosphate. The catalysed reaction is L-histidyl-[protein] + UTP = N(tele)-(5'-uridylyl)-L-histidyl-[protein] + diphosphate. The enzyme catalyses L-seryl-[protein] + UTP = O-(5'-uridylyl)-L-seryl-[protein] + diphosphate. It carries out the reaction L-tyrosyl-[protein] + UTP = O-(5'-uridylyl)-L-tyrosyl-[protein] + diphosphate. In terms of biological role, nucleotidyltransferase involved in the post-translational modification of proteins. It can catalyze the addition of adenosine monophosphate (AMP) or uridine monophosphate (UMP) to a protein, resulting in modifications known as AMPylation and UMPylation. The sequence is that of Protein nucleotidyltransferase YdiU from Clostridium botulinum (strain Eklund 17B / Type B).